The chain runs to 34 residues: Protein HRURF (34 aa).

May function as an inhibitory translational control element that can negatively regulate protein translation of HR gene. The polypeptide is Protein HRURF (Homo sapiens (Human)).